Consider the following 226-residue polypeptide: Deoxyribose-phosphate aldolase (226 aa).

Residue D93 is the Proton donor/acceptor of the active site. K159 functions as the Schiff-base intermediate with acetaldehyde in the catalytic mechanism. The Proton donor/acceptor role is filled by K189.

This sequence belongs to the DeoC/FbaB aldolase family. DeoC type 1 subfamily.

It localises to the cytoplasm. It carries out the reaction 2-deoxy-D-ribose 5-phosphate = D-glyceraldehyde 3-phosphate + acetaldehyde. Its pathway is carbohydrate degradation; 2-deoxy-D-ribose 1-phosphate degradation; D-glyceraldehyde 3-phosphate and acetaldehyde from 2-deoxy-alpha-D-ribose 1-phosphate: step 2/2. Its function is as follows. Catalyzes a reversible aldol reaction between acetaldehyde and D-glyceraldehyde 3-phosphate to generate 2-deoxy-D-ribose 5-phosphate. This is Deoxyribose-phosphate aldolase from Mycobacterium marinum (strain ATCC BAA-535 / M).